Here is a 144-residue protein sequence, read N- to C-terminus: 3-hydroxyacyl-[acyl-carrier-protein] dehydratase FabZ (144 aa).

Residue His-47 is part of the active site.

Belongs to the thioester dehydratase family. FabZ subfamily.

It localises to the cytoplasm. It carries out the reaction a (3R)-hydroxyacyl-[ACP] = a (2E)-enoyl-[ACP] + H2O. In terms of biological role, involved in unsaturated fatty acids biosynthesis. Catalyzes the dehydration of short chain beta-hydroxyacyl-ACPs and long chain saturated and unsaturated beta-hydroxyacyl-ACPs. This is 3-hydroxyacyl-[acyl-carrier-protein] dehydratase FabZ from Nitrosomonas eutropha (strain DSM 101675 / C91 / Nm57).